Reading from the N-terminus, the 384-residue chain is Prokineticin receptor 2 (384 aa).

Residues 1-54 are Extracellular-facing; the sequence is MAAQNGNTSFTPNFNPPQDHASSLSFNFSYGDYDLPMDEDEDMTKTRTFFAAKI. N-linked (GlcNAc...) asparagine glycosylation is found at N7 and N27. The chain crosses the membrane as a helical span at residues 55–75; sequence VIGIALAGIMLVCGIGNFVFI. The Cytoplasmic portion of the chain corresponds to 76–89; the sequence is AALTRYKKLRNLTN. The helical transmembrane segment at 90 to 110 threads the bilayer; that stretch reads LLIANLAISDFLVAIICCPFE. Over 111-136 the chain is Extracellular; the sequence is MDYYVVRQLSWEHGHVLCASVNYLRT. C128 and C208 are disulfide-bonded. A helical membrane pass occupies residues 137–157; it reads VSLYVSTNALLAIAIDRYLAI. Over 158–171 the chain is Cytoplasmic; that stretch reads VHPLKPRMNYQTAS. The helical transmembrane segment at 172–192 threads the bilayer; sequence FLIALVWMVSILIAIPSAYFA. The Extracellular segment spans residues 193 to 223; that stretch reads TETVLFIVKSQEKIFCGQIWPVDQQLYYKSY. The chain crosses the membrane as a helical span at residues 224-244; that stretch reads FLFIFGVEFVGPVVTMTLCYA. Residues 245–273 lie on the Cytoplasmic side of the membrane; sequence RISRELWFKAVPGFQTEQIRKRLRCRRKT. Residues 274–294 traverse the membrane as a helical segment; sequence VLVLMCILTAYVLCWAPFYGF. Over 295–313 the chain is Extracellular; sequence TIVRDFFPTVFVKEKHYLT. The chain crosses the membrane as a helical span at residues 314–334; it reads AFYVVECIAMSNSMINTVCFV. At 335–384 the chain is on the cytoplasmic side; the sequence is TVKNNTMKYFKKMMLLHWRPSQRGSKSSADLDLRTNGVPTTEEVDCIRLK.

It belongs to the G-protein coupled receptor 1 family. Homodimer. As to expression, expressed in the ileocecum, thyroid gland, pituitary gland, salivary gland, adrenal gland, testis, ovary and brain.

The protein localises to the cell membrane. In terms of biological role, receptor for prokineticin 2. Exclusively coupled to the G(q) subclass of heteromeric G proteins. Activation leads to mobilization of calcium, stimulation of phosphoinositide turnover and activation of p44/p42 mitogen-activated protein kinase. The chain is Prokineticin receptor 2 (PROKR2) from Homo sapiens (Human).